Consider the following 718-residue polypeptide: GMP synthase [glutamine-hydrolyzing] (718 aa).

Residues 43-247 (VIVILDAGSQ…LIDICGCSAN (205 aa)) enclose the Glutamine amidotransferase type-1 domain. Active-site for GATase activity residues include Cys128, His221, and Glu223. The GMPS ATP-PPase domain maps to 248–457 (YTLDDREQQA…LGLSDSLVWR (210 aa)). 275 to 281 (SGGVDST) is an ATP binding site.

Homodimer.

It catalyses the reaction XMP + L-glutamine + ATP + H2O = GMP + L-glutamate + AMP + diphosphate + 2 H(+). The protein operates within purine metabolism; GMP biosynthesis; GMP from XMP (L-Gln route): step 1/1. In Dictyostelium discoideum (Social amoeba), this protein is GMP synthase [glutamine-hydrolyzing] (guaA).